Reading from the N-terminus, the 250-residue chain is 1-(5-phosphoribosyl)-5-[(5-phosphoribosylamino)methylideneamino] imidazole-4-carboxamide isomerase (250 aa).

Asp12 serves as the catalytic Proton acceptor. The active-site Proton donor is Asp134.

It belongs to the HisA/HisF family.

It localises to the cytoplasm. It catalyses the reaction 1-(5-phospho-beta-D-ribosyl)-5-[(5-phospho-beta-D-ribosylamino)methylideneamino]imidazole-4-carboxamide = 5-[(5-phospho-1-deoxy-D-ribulos-1-ylimino)methylamino]-1-(5-phospho-beta-D-ribosyl)imidazole-4-carboxamide. Its pathway is amino-acid biosynthesis; L-histidine biosynthesis; L-histidine from 5-phospho-alpha-D-ribose 1-diphosphate: step 4/9. The polypeptide is 1-(5-phosphoribosyl)-5-[(5-phosphoribosylamino)methylideneamino] imidazole-4-carboxamide isomerase (Actinobacillus pleuropneumoniae serotype 5b (strain L20)).